Here is a 103-residue protein sequence, read N- to C-terminus: Nucleoid-associated protein NIS_0256 (103 aa).

Belongs to the YbaB/EbfC family. In terms of assembly, homodimer.

Its subcellular location is the cytoplasm. The protein resides in the nucleoid. Binds to DNA and alters its conformation. May be involved in regulation of gene expression, nucleoid organization and DNA protection. This is Nucleoid-associated protein NIS_0256 from Nitratiruptor sp. (strain SB155-2).